A 108-amino-acid chain; its full sequence is DNA-binding protein HBbu (108 aa).

Belongs to the bacterial histone-like protein family.

Functionally, histone-like DNA-binding protein which is capable of wrapping DNA to stabilize it, and thus to prevent its denaturation under extreme environmental conditions. The protein is DNA-binding protein HBbu (hbb) of Borreliella afzelii (Borrelia afzelii).